We begin with the raw amino-acid sequence, 465 residues long: Serine carboxypeptidase-like 46 (465 aa).

An N-terminal signal peptide occupies residues 1 to 25 (MPRLQCLTMATSLILLLQALSLVSS). Disulfide bonds link Cys88-Cys344, Cys245-Cys263, and Cys288-Cys313. 2 N-linked (GlcNAc...) asparagine glycosylation sites follow: Asn137 and Asn170. Residue Ser179 is part of the active site. Asn246 carries N-linked (GlcNAc...) asparagine glycosylation. Residues Asp381 and His438 contribute to the active site.

Belongs to the peptidase S10 family. Ubiquitous.

It is found in the secreted. Its function is as follows. Probable carboxypeptidase. This is Serine carboxypeptidase-like 46 (SCPL46) from Arabidopsis thaliana (Mouse-ear cress).